A 484-amino-acid polypeptide reads, in one-letter code: Aspartyl aminopeptidase (484 aa).

Methionine 1 bears the N-acetylmethionine mark. Residue histidine 84 coordinates Zn(2+). Substrate is bound at residue histidine 159. Low complexity predominate over residues 188–206; sequence PVESKSTTTTTTTESPKTS. Residues 188–213 are disordered; that stretch reads PVESKSTTTTTTTESPKTSDPQDVNS. Aspartate 266 lines the Zn(2+) pocket. Residue glutamate 301 participates in substrate binding. 2 residues coordinate Zn(2+): glutamate 302 and aspartate 354. Residues aspartate 354, histidine 357, lysine 382, and tyrosine 389 each contribute to the substrate site. Histidine 448 lines the Zn(2+) pocket.

The protein belongs to the peptidase M18 family. In terms of assembly, tetrahedron-shaped homododecamer built from six homodimers. It depends on Zn(2+) as a cofactor.

Its subcellular location is the cytoplasm. It carries out the reaction Release of an N-terminal aspartate or glutamate from a peptide, with a preference for aspartate.. Likely to play an important role in intracellular protein and peptide metabolism. In Dictyostelium discoideum (Social amoeba), this protein is Aspartyl aminopeptidase (dnpep).